The chain runs to 216 residues: MOB kinase activator-like 1 homolog C (216 aa).

Residues Cys78, Cys83, His160, and His165 each coordinate Zn(2+).

The protein belongs to the MOB1/phocein family.

In Dictyostelium discoideum (Social amoeba), this protein is MOB kinase activator-like 1 homolog C (mobC).